Reading from the N-terminus, the 288-residue chain is AA9 family lytic polysaccharide monooxygenase A (288 aa).

The first 22 residues, 1 to 22 (MKSTSATKFSVLAAATFAAAHG), serve as a signal peptide directing secretion. Cu(2+) is bound by residues His21 and His104. Cystine bridges form between Cys74–Cys191 and Cys115–Cys119. Asn151 carries an N-linked (GlcNAc...) asparagine glycan. O2 contacts are provided by His177 and Gln186. Cu(2+) is bound at residue Tyr188. The segment at 236–270 (PEPYKSGSGSSDNAAEAVSSAAAEEPAAAATSAAA) is disordered. The span at 249–270 (AAEAVSSAAAEEPAAAATSAAA) shows a compositional bias: low complexity.

Belongs to the polysaccharide monooxygenase AA9 family. It depends on Cu(2+) as a cofactor.

It localises to the secreted. It carries out the reaction [(1-&gt;4)-beta-D-glucosyl]n+m + reduced acceptor + O2 = 4-dehydro-beta-D-glucosyl-[(1-&gt;4)-beta-D-glucosyl]n-1 + [(1-&gt;4)-beta-D-glucosyl]m + acceptor + H2O.. Its function is as follows. Lytic polysaccharide monooxygenase (LPMO) that depolymerizes crystalline and amorphous polysaccharides via the oxidation of scissile alpha- or beta-(1-4)-glycosidic bonds, yielding C1 and C4 oxidation products. Catalysis by LPMOs requires the reduction of the active-site copper from Cu(II) to Cu(I) by a reducing agent and H(2)O(2) or O(2) as a cosubstrate. Active on cellulose and on xyloglucan for deconstruction of plant biomass. This is AA9 family lytic polysaccharide monooxygenase A from Geotrichum candidum (Oospora lactis).